The chain runs to 393 residues: Cytotoxic and regulatory T-cell molecule (393 aa).

The signal sequence occupies residues 1-16 (MWWGALSLLFWVPVQA). Residues 17-111 (AFLKMETVTV…SVKTKQVRVT (95 aa)) form the Ig-like V-type domain. Residues 17–289 (AFLKMETVTV…HTGLARRKSG (273 aa)) lie on the Extracellular side of the membrane. 2 cysteine pairs are disulfide-bonded: Cys-36–Cys-96 and Cys-139–Cys-194. N-linked (GlcNAc...) asparagine glycans are attached at residues Asn-85 and Asn-176. The region spanning 119–208 (PTVEALVLRR…EGLHGRKLVA (90 aa)) is the Ig-like C2-type domain. Residues 218 to 228 (DQETSDQETSD) show a composition bias toward acidic residues. The tract at residues 218–280 (DQETSDQETS…GLSTEASAQH (63 aa)) is disordered. Positions 229 to 246 (APEQSSLSSQALQQPTST) are enriched in low complexity. The span at 247–256 (VSMMENSSIP) shows a compositional bias: polar residues. Residues 257–267 (ETDKEEKEHAT) are compositionally biased toward basic and acidic residues. Positions 270–280 (PGLSTEASAQH) are enriched in polar residues. A helical transmembrane segment spans residues 290-310 (ILLLTLVSFLIFILFIIVQLF). Over 311–393 (IMKLRKAHVV…KHSRVPESIV (83 aa)) the chain is Cytoplasmic. The interval 333–356 (ESYRSRSNNEETSSQENSSQAPQS) is disordered. Residues 342-352 (EETSSQENSSQ) show a composition bias toward low complexity. The short motif at 390 to 393 (ESIV) is the PDZ-binding element.

It belongs to the nectin family. As to quaternary structure, monomer. May form homodimer (via Ig-like V-type domain). Interacts (via Ig-like V-type domain) with CADM1 (via Ig-like V-type domain); the interaction competes with CRTAM homodimerization and CADM1 homodimerization. Interacts (via PDZ-binding motif) with SCRIB (via PDZ domain 3); the interaction promotes CRTAM and SCRIB polarization in a subset of CD4+ T-cells. As to expression, in the immune system, expression is restricted to activated class-I MHC-restricted cells, including NKT, NK and CD8+ T-cells (at protein level). Transiently expressed in activated CD8+ T-cells and a subset of activated CD4+ T-cells (at protein level). Expressed in activated intestinal T-cells, specifically intraepithelial CD4+ CD8+ T-cells, intraepithelial CD4+ T-cells and, CD8+ T-cells in the intestine epithelium, lamina propria, Peyer's Patches and mesenteric lymph nodes. Also expressed in spleen, brain and testis.

Its subcellular location is the cell membrane. Functionally, mediates heterophilic cell-cell adhesion which regulates the activation, differentiation and tissue retention of various T-cell subsets. Interaction with CADM1 promotes natural killer (NK) cell cytotoxicity and IFNG/interferon-gamma secretion by CD8+ T-cells in vitro as well as NK cell-mediated rejection of tumors expressing CADM1 in vivo. Regulates CD8+ T-cell proliferation in response to T-cell receptor (TCR) activation. Appears to be dispensable for CD8+ T-cell-mediated cytotoxicity. Interaction with SCRIB promotes the late phase of cellular polarization of a subset of CD4+ T-cells, which in turn regulates TCR-mediated proliferation and IFNG, IL17 and IL22 production. By interacting with CADM1 on CD8+ dendritic cells, regulates the retention of activated CD8+ T-cells within the draining lymph node. Required for the intestinal retention of intraepithelial CD4+ CD8+ T-cells and, to a lesser extent, intraepithelial and lamina propria CD8+ T-cells and CD4+ T-cells. Interaction with CADM1 promotes the adhesion to gut-associated CD103+ dendritic cells, which may facilitate the expression of gut-homing and adhesion molecules on T-cells and the conversion of CD4+ T-cells into CD4+ CD8+ T-cells. This Mus musculus (Mouse) protein is Cytotoxic and regulatory T-cell molecule.